The primary structure comprises 355 residues: NADH-quinone oxidoreductase subunit H (355 aa).

8 helical membrane passes run 25–45 (IVRI…LILW), 91–111 (WLYL…WAVI), 126–146 (LLYA…AGWA), 170–190 (MGFA…SEIV), 205–225 (FLSW…ISGI), 252–272 (GMAF…ISAL), 290–310 (FIPG…VFIW), and 330–350 (VFLP…MSPL).

The protein belongs to the complex I subunit 1 family. As to quaternary structure, NDH-1 is composed of 14 different subunits. Subunits NuoA, H, J, K, L, M, N constitute the membrane sector of the complex.

The protein resides in the cell inner membrane. The enzyme catalyses a quinone + NADH + 5 H(+)(in) = a quinol + NAD(+) + 4 H(+)(out). Its function is as follows. NDH-1 shuttles electrons from NADH, via FMN and iron-sulfur (Fe-S) centers, to quinones in the respiratory chain. The immediate electron acceptor for the enzyme in this species is believed to be ubiquinone. Couples the redox reaction to proton translocation (for every two electrons transferred, four hydrogen ions are translocated across the cytoplasmic membrane), and thus conserves the redox energy in a proton gradient. This subunit may bind ubiquinone. In Burkholderia lata (strain ATCC 17760 / DSM 23089 / LMG 22485 / NCIMB 9086 / R18194 / 383), this protein is NADH-quinone oxidoreductase subunit H.